A 385-amino-acid chain; its full sequence is Pectate lyase E (385 aa).

The first 30 residues, 1–30 (MKNTRVRSIGTKSLLAAVVTAALMATSAYA), serve as a signal peptide directing secretion. D164 contributes to the Ca(2+) binding site. The stretch at 177-182 (DHVTIS) is repeat 1. Positions 177–218 (DHVTISDGSFTDDKYTTKDGEKYVQHDGALDIKKGSDYVTIS) are 2 X 6 AA approximate repeats. D207 is a Ca(2+) binding site. Residues 213-218 (DYVTIS) form repeat 2. R260 is an active-site residue.

This sequence belongs to the polysaccharide lyase 1 family. PLBC subfamily. The cofactor is Ca(2+).

It localises to the secreted. It catalyses the reaction Eliminative cleavage of (1-&gt;4)-alpha-D-galacturonan to give oligosaccharides with 4-deoxy-alpha-D-galact-4-enuronosyl groups at their non-reducing ends.. Its pathway is glycan metabolism; pectin degradation; 2-dehydro-3-deoxy-D-gluconate from pectin: step 2/5. Its function is as follows. Involved in maceration and soft-rotting of plant tissue. The chain is Pectate lyase E (pelE) from Dickeya chrysanthemi (Pectobacterium chrysanthemi).